We begin with the raw amino-acid sequence, 367 residues long: 2-aminoethylphosphonate--pyruvate transaminase (367 aa).

Residue Lys193 is modified to N6-(pyridoxal phosphate)lysine.

It belongs to the class-V pyridoxal-phosphate-dependent aminotransferase family. PhnW subfamily. In terms of assembly, homodimer. The cofactor is pyridoxal 5'-phosphate.

The enzyme catalyses (2-aminoethyl)phosphonate + pyruvate = phosphonoacetaldehyde + L-alanine. Functionally, involved in phosphonate degradation. The protein is 2-aminoethylphosphonate--pyruvate transaminase of Vibrio cholerae serotype O1 (strain ATCC 39541 / Classical Ogawa 395 / O395).